We begin with the raw amino-acid sequence, 106 residues long: Large ribosomal subunit protein P2 (106 aa).

The segment at 80 to 106 is disordered; sequence AAAAPAKKVVEEKKEESDDDMGMGLFD.

It belongs to the eukaryotic ribosomal protein P1/P2 family. As to quaternary structure, P1 and P2 exist as dimers at the large ribosomal subunit. Post-translationally, phosphorylated.

Plays an important role in the elongation step of protein synthesis. The chain is Large ribosomal subunit protein P2 (rplp2) from Dictyostelium discoideum (Social amoeba).